Reading from the N-terminus, the 228-residue chain is F-box protein At5g67140 (228 aa).

In terms of domain architecture, F-box spans 4–51; that stretch reads EAAIDRLPLDLLAYIFSLATSFTVLAQASGVCKKWRKAVNQSMARRET.

This is F-box protein At5g67140 from Arabidopsis thaliana (Mouse-ear cress).